The sequence spans 460 residues: Phosphomethylpyrimidine synthase (460 aa).

Substrate is bound by residues Asn-80, Met-109, Tyr-139, His-175, Ser-195–Gly-197, Asp-236–Arg-239, and Glu-275. His-279 contributes to the Zn(2+) binding site. Tyr-302 is a binding site for substrate. His-343 is a Zn(2+) binding site. [4Fe-4S] cluster-binding residues include Cys-423, Cys-426, and Cys-431.

It belongs to the ThiC family. The cofactor is [4Fe-4S] cluster.

It carries out the reaction 5-amino-1-(5-phospho-beta-D-ribosyl)imidazole + S-adenosyl-L-methionine = 4-amino-2-methyl-5-(phosphooxymethyl)pyrimidine + CO + 5'-deoxyadenosine + formate + L-methionine + 3 H(+). Its pathway is cofactor biosynthesis; thiamine diphosphate biosynthesis. Catalyzes the synthesis of the hydroxymethylpyrimidine phosphate (HMP-P) moiety of thiamine from aminoimidazole ribotide (AIR) in a radical S-adenosyl-L-methionine (SAM)-dependent reaction. The protein is Phosphomethylpyrimidine synthase of Rippkaea orientalis (strain PCC 8801 / RF-1) (Cyanothece sp. (strain PCC 8801)).